We begin with the raw amino-acid sequence, 295 residues long: Forkhead box protein N5 (295 aa).

Positions 119-146 (STVEDSEDEAPTSCSDLMTDDDNDDSYN) are disordered. The segment at residues 178–275 (RPPLNYCNLI…NEMHALSDDL (98 aa)) is a DNA-binding region (fork-head).

In terms of tissue distribution, ubiquitously expressed in early cleavage stage and gastrula stage embryos.

The protein localises to the nucleus. In Xenopus laevis (African clawed frog), this protein is Forkhead box protein N5.